Consider the following 310-residue polypeptide: Carbamate kinase 1 (310 aa).

It belongs to the carbamate kinase family.

The protein localises to the cytoplasm. It catalyses the reaction hydrogencarbonate + NH4(+) + ATP = carbamoyl phosphate + ADP + H2O + H(+). The protein operates within metabolic intermediate metabolism; carbamoyl phosphate degradation; CO(2) and NH(3) from carbamoyl phosphate: step 1/1. The sequence is that of Carbamate kinase 1 (arcC1) from Staphylococcus epidermidis (strain ATCC 12228 / FDA PCI 1200).